A 184-amino-acid polypeptide reads, in one-letter code: Shikimate kinase (184 aa).

Gly17–Thr22 is a binding site for ATP. Thr21 contacts Mg(2+). Substrate is bound by residues Asp39, Arg63, and Gly85. Arg123 lines the ATP pocket. Position 142 (Arg142) interacts with substrate.

The protein belongs to the shikimate kinase family. In terms of assembly, monomer. Mg(2+) is required as a cofactor.

The protein resides in the cytoplasm. The enzyme catalyses shikimate + ATP = 3-phosphoshikimate + ADP + H(+). Its pathway is metabolic intermediate biosynthesis; chorismate biosynthesis; chorismate from D-erythrose 4-phosphate and phosphoenolpyruvate: step 5/7. Its function is as follows. Catalyzes the specific phosphorylation of the 3-hydroxyl group of shikimic acid using ATP as a cosubstrate. The polypeptide is Shikimate kinase (Burkholderia lata (strain ATCC 17760 / DSM 23089 / LMG 22485 / NCIMB 9086 / R18194 / 383)).